The chain runs to 64 residues: Anti-sigma-G factor Gin (64 aa).

Residues C11, C14, C30, and C33 each contribute to the Zn(2+) site.

As to quaternary structure, probably functions as a homodimer. Interacts with sigma-G factor, recognition occurs via the first 71 residues of sigma-G. Requires Zn(2+) as cofactor.

In terms of biological role, an anti-sigma-G factor, prevents premature activation of sigma-G factor in the forespore; overexpression leads to 1000-fold reduction in spore formation, spore formation stops after engulfment. Overexpression also inhibits sigma-G transcription activation activity. When both Gin and sigma-G are expressed in E.coli Gin inhibits sigma-G, strongly suggesting Gin inhibits by direct physical interaction. The chain is Anti-sigma-G factor Gin from Bacillus subtilis (strain 168).